We begin with the raw amino-acid sequence, 271 residues long: Mannosyl-3-phosphoglycerate phosphatase (271 aa).

D13 (nucleophile) is an active-site residue. D13, D15, and D214 together coordinate Mg(2+).

It belongs to the HAD-like hydrolase superfamily. MPGP family. Requires Mg(2+) as cofactor.

The protein localises to the cytoplasm. The catalysed reaction is 2-O-(alpha-D-mannosyl)-3-phosphoglycerate + H2O = (2R)-2-O-(alpha-D-mannosyl)-glycerate + phosphate. The protein is Mannosyl-3-phosphoglycerate phosphatase of Escherichia coli O81 (strain ED1a).